We begin with the raw amino-acid sequence, 495 residues long: Tyrosine 3-monooxygenase (495 aa).

A Phosphoserine; by CaMK2 modification is found at Ser-19. Position 31 is a phosphoserine (Ser-31). Residue Ser-40 is modified to Phosphoserine; by CaMK2 and PKA. Basic and acidic residues predominate over residues 41–53 (LIEDARKEREKAE). A disordered region spans residues 41–65 (LIEDARKEREKAEAASAASSEPGDL). The Fe cation site is built by His-328, His-333, and Glu-373. At Ser-469 the chain carries Phosphoserine.

Belongs to the biopterin-dependent aromatic amino acid hydroxylase family. In terms of assembly, homotetramer. Interacts (when phosphorylated at Ser-19) with YWHAG; one YWHAG dimer bounds to one TH tetramer this interaction may influence the phosphorylation and dephosphorylation of other sites. Fe(2+) serves as cofactor. Post-translationally, phosphorylated on Ser-19, Ser-31 and Ser-40 by several protein kinases with different site specificities. Phosphorylation at Ser-31 and Ser-40 leads to an increase of TH activity. Phosphorylation at Ser-40 activates the enzyme and also counteracts the feedback inhibition of TH by catecholamines. Phosphorylation of Ser-19 and Ser-31 triggers the proteasomal degradation of TH through the ubiquitin-proteasome pathway. Phosphorylation at Ser-31 facilitates transport of TH from the soma to the nerve terminals via the microtubule network. Phosphorylation at Ser-19 induces the high-affinity binding to the 14-3-3 protein YWHAG; this interaction may influence the phosphorylation and dephosphorylation of other sites. Ser-19 increases the phosphorylation at Ser-40 in a hierarchical manner, leading to increased activity.

It localises to the cytoplasm. It is found in the perinuclear region. Its subcellular location is the nucleus. The protein localises to the cell projection. The protein resides in the axon. It localises to the cytoplasmic vesicle. It is found in the secretory vesicle. Its subcellular location is the synaptic vesicle. It catalyses the reaction (6R)-L-erythro-5,6,7,8-tetrahydrobiopterin + L-tyrosine + O2 = (4aS,6R)-4a-hydroxy-L-erythro-5,6,7,8-tetrahydrobiopterin + L-dopa. It participates in catecholamine biosynthesis; dopamine biosynthesis; dopamine from L-tyrosine: step 1/2. Inhibited in feedback fashion by the catecholamine neurotransmitters, especially by dopamine in competition with tetrahydrobiopterin. Phosphorylation of several Ser/Thr residues in the N-terminus regulates the catalytic activity. Ser-31 and Ser-40 are readily phosphorylated to activate the catalytic activity. A Cysteine modification induced by N-ethylmaleimide (NEM), inhibits tyrosine 3-monooxygenase activity through the modification of the Cys-174. In terms of biological role, catalyzes the conversion of L-tyrosine to L-dihydroxyphenylalanine (L-Dopa), the rate-limiting step in the biosynthesis of cathecolamines, dopamine, noradrenaline, and adrenaline. Uses tetrahydrobiopterin and molecular oxygen to convert tyrosine to L-Dopa. In addition to tyrosine, is able to catalyze the hydroxylation of phenylalanine and tryptophan with lower specificity. Positively regulates the regression of retinal hyaloid vessels during postnatal development. The protein is Tyrosine 3-monooxygenase (TH) of Canis lupus familiaris (Dog).